A 327-amino-acid chain; its full sequence is MIDQIIDEVTDSDPYQELLVTADGVAEGTLGVRLDKWLAEQLPELSRSRCQKLIESGQVQRNGLVCQDKNLILKTGDRLVVNIPELIPLDVVAQNIPLDILYEDEQLIIINKPAGLVVHPGPGHPDGTVVNALLAHCPDLAGIGGVQRPGIVHRLDKDTTGAMVVAKTELALHNLQVQLKEKTARRLYWGIVYGSPKEIQGTVNLPVGRHPGDRQKMGIVPVEKGGREAVTHWRLLERIGNHSWLEFQLETGRTHQIRVHSKQMGHPLVGDNLYTSPGSVNVNLPGQALHAHQLSLIHPVSGEIITAIAPMPAHFEKLLVYLRQRIP.

Positions 32-105 (VRLDKWLAEQ…IPLDILYEDE (74 aa)) constitute an S4 RNA-binding domain. The active site involves Asp-156.

This sequence belongs to the pseudouridine synthase RluA family.

The catalysed reaction is a uridine in RNA = a pseudouridine in RNA. This is an uncharacterized protein from Synechocystis sp. (strain ATCC 27184 / PCC 6803 / Kazusa).